The chain runs to 161 residues: Putative 4-hydroxy-4-methyl-2-oxoglutarate aldolase (161 aa).

Substrate-binding positions include 75 to 78 (GDNL) and arginine 97. A divalent metal cation is bound at residue aspartate 98.

The protein belongs to the class II aldolase/RraA-like family. Homotrimer. A divalent metal cation is required as a cofactor.

The enzyme catalyses 4-hydroxy-4-methyl-2-oxoglutarate = 2 pyruvate. It catalyses the reaction oxaloacetate + H(+) = pyruvate + CO2. Functionally, catalyzes the aldol cleavage of 4-hydroxy-4-methyl-2-oxoglutarate (HMG) into 2 molecules of pyruvate. Also contains a secondary oxaloacetate (OAA) decarboxylase activity due to the common pyruvate enolate transition state formed following C-C bond cleavage in the retro-aldol and decarboxylation reactions. This is Putative 4-hydroxy-4-methyl-2-oxoglutarate aldolase from Alkalilimnicola ehrlichii (strain ATCC BAA-1101 / DSM 17681 / MLHE-1).